We begin with the raw amino-acid sequence, 115 residues long: uncharacterized protein (115 aa).

The first 26 residues, 1-26 (MNFKKTVVSALSISALALSVSGVASA), serve as a signal peptide directing secretion. The 79-residue stretch at 36–114 (VKNISISPTH…AVFGKVYVTV (79 aa)) folds into the BIG2 domain.

This is an uncharacterized protein from Bacillus subtilis (strain 168).